A 165-amino-acid chain; its full sequence is Putative inactive neutral ceramidase B (165 aa).

It belongs to the neutral ceramidase family. In terms of tissue distribution, ubiquitous. Expression is reduced with increasing age and in late-onset Alzheimer disease (LOAD) patients. This reduction is even more pronounced in patients with an affected mother.

The polypeptide is Putative inactive neutral ceramidase B (Homo sapiens (Human)).